We begin with the raw amino-acid sequence, 567 residues long: Urease subunit alpha (567 aa).

Positions 129-567 (GGIDSHIHFI…LPLAQRYFLF (439 aa)) constitute a Urease domain. Residues His-134, His-136, and Lys-217 each contribute to the Ni(2+) site. Position 217 is an N6-carboxylysine (Lys-217). His-219 provides a ligand contact to substrate. Residues His-246 and His-272 each contribute to the Ni(2+) site. Residue His-320 is the Proton donor of the active site. Asp-360 lines the Ni(2+) pocket.

The protein belongs to the metallo-dependent hydrolases superfamily. Urease alpha subunit family. As to quaternary structure, heterotrimer of UreA (gamma), UreB (beta) and UreC (alpha) subunits. Three heterotrimers associate to form the active enzyme. It depends on Ni cation as a cofactor. Carboxylation allows a single lysine to coordinate two nickel ions.

The protein localises to the cytoplasm. It catalyses the reaction urea + 2 H2O + H(+) = hydrogencarbonate + 2 NH4(+). It functions in the pathway nitrogen metabolism; urea degradation; CO(2) and NH(3) from urea (urease route): step 1/1. This chain is Urease subunit alpha, found in Pseudomonas entomophila (strain L48).